The sequence spans 105 residues: UPF0148 protein PYRAB12700 (105 aa).

The protein belongs to the UPF0148 family.

The sequence is that of UPF0148 protein PYRAB12700 from Pyrococcus abyssi (strain GE5 / Orsay).